We begin with the raw amino-acid sequence, 660 residues long: Epithelial sodium channel subunit gamma (660 aa).

Residues 1-55 (MSKSGKKLTQKLKKNLPVTGPQAPTLYELMQWYCLNTNTHGCRRIVVSKGRLRRW) are Cytoplasmic-facing. Residues 56–76 (IWISLTLCAVAVIFWQCALLL) form a helical membrane-spanning segment. Residues 77–537 (MSYYSVSASI…VTLLSNFGGQ (461 aa)) are Extracellular-facing. Cystine bridges form between C101/C286, C209/C217, C263/C270, C375/C460, C397/C456, C401/C452, C410/C437, and C412/C426. Residues 538–558 (LGLWMSCSMICVLEIIEVFFI) form a helical membrane-spanning segment. Over 559–660 (DSFWVVLRQR…IDSDEDVERL (102 aa)) the chain is Cytoplasmic.

This sequence belongs to the amiloride-sensitive sodium channel (TC 1.A.6) family. SCNN1G subfamily. Component of the heterotrimeric epithelial sodium channel (ENaC) composed of an alpha/SCNN1A, a beta/SCNN1B and a gamma/SCNN1G subunit.

It localises to the apical cell membrane. It carries out the reaction Na(+)(in) = Na(+)(out). Its activity is regulated as follows. Originally identified and characterized by its inhibition by the diuretic drug amiloride. Functionally, this is one of the three pore-forming subunits of the heterotrimeric epithelial sodium channel (ENaC), a critical regulator of sodium balance and fluid homeostasis. ENaC operates in epithelial tissues, where it mediates the electrodiffusion of sodium ions from extracellular fluid through the apical membrane of cells, with water following osmotically. The chain is Epithelial sodium channel subunit gamma (scnn1g-a) from Xenopus laevis (African clawed frog).